The following is a 488-amino-acid chain: (S)-N-methylcoclaurine 3'-hydroxylase isozyme 2 (488 aa).

The chain crosses the membrane as a helical span at residues Val3–Ser23. Cys430 provides a ligand contact to heme.

It belongs to the cytochrome P450 family. Heme serves as cofactor.

The protein localises to the endoplasmic reticulum membrane. Its subcellular location is the microsome membrane. The enzyme catalyses (S)-N-methylcoclaurine + reduced [NADPH--hemoprotein reductase] + O2 = (S)-3'-hydroxy-N-methylcoclaurine + oxidized [NADPH--hemoprotein reductase] + H2O + H(+). The protein operates within alkaloid biosynthesis; (S)-reticuline biosynthesis; (S)-reticuline from (S)-norcoclaurine: step 3/4. Functionally, 3'-hydroxylation of (S)-N-methylcoclaurine. The polypeptide is (S)-N-methylcoclaurine 3'-hydroxylase isozyme 2 (CYP80B2) (Eschscholzia californica (California poppy)).